A 425-amino-acid chain; its full sequence is Serine--tRNA ligase (425 aa).

230–232 contributes to the L-serine binding site; that stretch reads TAE. 261 to 263 is an ATP binding site; the sequence is RSE. Glu284 provides a ligand contact to L-serine. 348 to 351 lines the ATP pocket; the sequence is EISS. Ser384 serves as a coordination point for L-serine.

The protein belongs to the class-II aminoacyl-tRNA synthetase family. Type-1 seryl-tRNA synthetase subfamily. In terms of assembly, homodimer. The tRNA molecule binds across the dimer.

Its subcellular location is the cytoplasm. The catalysed reaction is tRNA(Ser) + L-serine + ATP = L-seryl-tRNA(Ser) + AMP + diphosphate + H(+). It carries out the reaction tRNA(Sec) + L-serine + ATP = L-seryl-tRNA(Sec) + AMP + diphosphate + H(+). It participates in aminoacyl-tRNA biosynthesis; selenocysteinyl-tRNA(Sec) biosynthesis; L-seryl-tRNA(Sec) from L-serine and tRNA(Sec): step 1/1. Functionally, catalyzes the attachment of serine to tRNA(Ser). Is also able to aminoacylate tRNA(Sec) with serine, to form the misacylated tRNA L-seryl-tRNA(Sec), which will be further converted into selenocysteinyl-tRNA(Sec). This Streptococcus pyogenes serotype M5 (strain Manfredo) protein is Serine--tRNA ligase.